The sequence spans 756 residues: Probable chemoreceptor y4sI (756 aa).

A run of 2 helical transmembrane segments spans residues 26–46 (VCVAVLSCTTVATFAGITSVA) and 330–350 (LIKIIGITAATAILALAMAIL). 2 HAMP domains span residues 353 to 406 (RSIS…ARVA) and 434 to 486 (DEQA…ETIR). One can recognise a Methyl-accepting transducer domain in the interval 491 to 720 (QAASMSSIVS…ESDAACRSLN (230 aa)). The tract at residues 736-756 (GGGSSTRQPQSPPTQRYFMSR) is disordered.

Belongs to the methyl-accepting chemotaxis (MCP) protein family.

Its subcellular location is the cell membrane. In terms of biological role, chemotactic-signal transducers respond to changes in the concentration of attractants and repellents in the environment, transduce a signal from the outside to the inside of the cell, and facilitate sensory adaptation through the variation of the level of methylation. Attractants increase the level of methylation while repellents decrease the level of methylation. The protein is Probable chemoreceptor y4sI of Sinorhizobium fredii (strain NBRC 101917 / NGR234).